Consider the following 106-residue polypeptide: Putative cytochrome c oxidase subunit 7A3, mitochondrial (106 aa).

A mitochondrion-targeting transit peptide spans 1-23 (MLWNLLALHQIGQRTISTASHRH).

This sequence belongs to the cytochrome c oxidase VIIa family.

The protein localises to the mitochondrion inner membrane. This Homo sapiens (Human) protein is Putative cytochrome c oxidase subunit 7A3, mitochondrial (COX7A2P2).